We begin with the raw amino-acid sequence, 206 residues long: Large ribosomal subunit protein uL4 (206 aa).

A disordered region spans residues 44-78 (RSGNRAQKDREQVKHTTKKPWRQKGTGRARAGMSS). Residues 58–70 (HTTKKPWRQKGTG) are compositionally biased toward basic residues.

The protein belongs to the universal ribosomal protein uL4 family. In terms of assembly, part of the 50S ribosomal subunit.

In terms of biological role, one of the primary rRNA binding proteins, this protein initially binds near the 5'-end of the 23S rRNA. It is important during the early stages of 50S assembly. It makes multiple contacts with different domains of the 23S rRNA in the assembled 50S subunit and ribosome. Functionally, forms part of the polypeptide exit tunnel. The polypeptide is Large ribosomal subunit protein uL4 (Paraburkholderia phytofirmans (strain DSM 17436 / LMG 22146 / PsJN) (Burkholderia phytofirmans)).